The following is a 123-amino-acid chain: Guanine nucleotide exchange factor MSS4 (123 aa).

Position 1 is an N-acetylmethionine (methionine 1). An MSS4 domain is found at 9 to 123 (ELVSAEGRNR…YVALERVSHE (115 aa)). Residues cysteine 23, cysteine 26, cysteine 94, and cysteine 97 each coordinate Zn(2+).

The protein belongs to the DSS4/MSS4 family. In terms of assembly, interacts with RAB8A. Ubiquitous.

In terms of biological role, guanine-nucleotide-releasing protein that acts on members of the SEC4/YPT1/RAB subfamily. Stimulates GDP release from both YPT1, RAB3A and RAB10, but is less active on these proteins than on the SEC4 protein. Might play a general role in vesicular transport. This chain is Guanine nucleotide exchange factor MSS4 (RABIF), found in Homo sapiens (Human).